A 275-amino-acid chain; its full sequence is S-methyl-5'-thioadenosine phosphorylase (275 aa).

Residues Ser-20, 62 to 63 (RH), and 95 to 96 (SA) each bind phosphate. Cystine bridges form between Cys-143/Cys-210, Cys-205/Cys-266, and Cys-264/Cys-267. Met-195 serves as a coordination point for substrate. Thr-196 provides a ligand contact to phosphate. Residue 219-221 (DYD) coordinates substrate.

The protein belongs to the PNP/MTAP phosphorylase family. MTAP subfamily. As to quaternary structure, homohexamer. Dimer of a homotrimer.

It carries out the reaction S-methyl-5'-thioadenosine + phosphate = 5-(methylsulfanyl)-alpha-D-ribose 1-phosphate + adenine. It participates in amino-acid biosynthesis; L-methionine biosynthesis via salvage pathway; S-methyl-5-thio-alpha-D-ribose 1-phosphate from S-methyl-5'-thioadenosine (phosphorylase route): step 1/1. Catalyzes the reversible phosphorylation of S-methyl-5'-thioadenosine (MTA) to adenine and 5-methylthioribose-1-phosphate. Involved in the breakdown of MTA, a major by-product of polyamine biosynthesis. Responsible for the first step in the methionine salvage pathway after MTA has been generated from S-adenosylmethionine. Has broad substrate specificity with 6-aminopurine nucleosides as preferred substrates. This chain is S-methyl-5'-thioadenosine phosphorylase, found in Aeropyrum pernix (strain ATCC 700893 / DSM 11879 / JCM 9820 / NBRC 100138 / K1).